Consider the following 506-residue polypeptide: Cobyric acid synthase (506 aa).

The region spanning Asp-251–Phe-448 is the GATase cobBQ-type domain. Cys-332 (nucleophile) is an active-site residue. Residue His-440 is part of the active site.

This sequence belongs to the CobB/CobQ family. CobQ subfamily.

It functions in the pathway cofactor biosynthesis; adenosylcobalamin biosynthesis. Catalyzes amidations at positions B, D, E, and G on adenosylcobyrinic A,C-diamide. NH(2) groups are provided by glutamine, and one molecule of ATP is hydrogenolyzed for each amidation. This chain is Cobyric acid synthase, found in Salmonella choleraesuis (strain SC-B67).